Consider the following 473-residue polypeptide: Zinc transporter SLC39A7 (473 aa).

Residues 11 to 31 (VAVGLLTWAALGLLVAGHGGH) form a helical membrane-spanning segment. Basic and acidic residues-rich tracts occupy residues 44-56 (GHSH…DFHH) and 66-114 (HTHE…EHSH). The interval 44-120 (GHSHRHSHED…EHSHGGYGES (77 aa)) is disordered. At histidine 66 the chain carries Pros-methylhistidine. Transmembrane regions (helical) follow at residues 138 to 158 (ALGA…LIPV), 169 to 189 (LQIL…LHLI), and 214 to 234 (GPIL…LVVE). The tract at residues 243–316 (GHEHSHGHGH…QHSGEEKAGS (74 aa)) is disordered. 2 positions are modified to phosphoserine: serine 278 and serine 279. The span at 298-316 (RPKDGPVRPQHSGEEKAGS) shows a compositional bias: basic and acidic residues. A helical transmembrane segment spans residues 388-408 (LLTAVGALAGTAFALLTEGGA). A disordered region spans residues 428–473 (GDQAATQASPRSTSLPPVGEEDFREDPGPRQKGQQEKSGINVNCVS). Over residues 431–442 (AATQASPRSTSL) the composition is skewed to polar residues. A compositionally biased stretch (basic and acidic residues) spans 452–462 (EDPGPRQKGQQ). Residues 463-473 (EKSGINVNCVS) are compositionally biased toward polar residues.

It belongs to the ZIP transporter (TC 2.A.5) family. KE4/Catsup subfamily. In terms of assembly, homodimer. Methylation at some His residue by METTL9 leads to reduced zinc-binding. Post-translationally, rapidly phosphorylated by CK2 following Zn(2+) treatment. This phosphorylation is required for efficient cytosolic Zn(2+) release.

Its subcellular location is the endoplasmic reticulum membrane. The protein resides in the golgi apparatus. It is found in the cis-Golgi network membrane. The enzyme catalyses Zn(2+)(in) = Zn(2+)(out). In terms of biological role, transports Zn(2+) from the endoplasmic reticulum (ER)/Golgi apparatus to the cytosol, playing an essential role in the regulation of cytosolic zinc levels. Acts as a gatekeeper of zinc release from intracellular stores, requiring post-translational activation by phosphorylation on residues, resulting in activation of multiple downstream pathways leading to cell growth and proliferation. Has an essential role in B cell development and is required for proper B cell receptor signaling. Plays an important role in maintaining intestinal epithelial homeostasis and skin dermis development by regulating ER function. Controls cell signaling pathways involved in glucose metabolism in skeletal muscle. Has a protective role against ER stress in different biological contexts. Mediates Zn(2+)-induced ferroptosis. The chain is Zinc transporter SLC39A7 (SLC39A7) from Sus scrofa (Pig).